Consider the following 826-residue polypeptide: Ubiquitin carboxyl-terminal hydrolase 16 (826 aa).

Residues 1–23 (MGKKRTKGKSVPEKASSESTEPM) are disordered. The UBP-type zinc-finger motif lies at 22–141 (PMCRHLRKGL…QVVDYVRKQA (120 aa)). Positions 24, 26, 48, 51, 73, 76, 81, 89, 93, 102, 115, and 118 each coordinate Zn(2+). Residue K139 forms a Glycyl lysine isopeptide (Lys-Gly) (interchain with G-Cter in SUMO2) linkage. Positions 145 to 184 (TSKPAEKNNGHIELENKKLEKESKNEQEREKSESMAKENI) are disordered. Positions 148–180 (PAEKNNGHIELENKKLEKESKNEQEREKSESMA) are enriched in basic and acidic residues. Residue S188 is modified to Phosphoserine. One can recognise a USP domain in the interval 195-825 (KGLSNLGNTC…QAYLLFYERI (631 aa)). The active-site Nucleophile is the C204. Residues 392-407 (QSGKKNINDKNVKKTM) show a composition bias toward basic and acidic residues. 2 disordered regions span residues 392–456 (QSGK…RRQQ) and 526–553 (ADERKCPEHPEVKSVSTESDLGSLTSAP). A compositionally biased stretch (acidic residues) spans 408–419 (EEEDKDSEEEKD). Residue S414 is modified to Phosphoserine. Residues 436-456 (HTQKKAKKQAKKQAKNQRRQQ) are compositionally biased toward basic residues. Basic and acidic residues predominate over residues 526–537 (ADERKCPEHPEV). Positions 539 to 551 (SVSTESDLGSLTS) are enriched in polar residues. H760 functions as the Proton acceptor in the catalytic mechanism.

Belongs to the peptidase C19 family. USP16 subfamily. In terms of assembly, homotetramer. Associates with late pre-40S ribosomes. Interacts with CEP78; promoting deubiquitination of tektins. In terms of processing, phosphorylated at the onset of mitosis and dephosphorylated during the metaphase/anaphase transition. Phosphorylation by AURKB enhances the deubiquitinase activity.

The protein resides in the nucleus. It catalyses the reaction Thiol-dependent hydrolysis of ester, thioester, amide, peptide and isopeptide bonds formed by the C-terminal Gly of ubiquitin (a 76-residue protein attached to proteins as an intracellular targeting signal).. Functionally, specifically deubiquitinates 'Lys-120' of histone H2A (H2AK119Ub), a specific tag for epigenetic transcriptional repression, thereby acting as a coactivator. Deubiquitination of histone H2A is a prerequisite for subsequent phosphorylation at 'Ser-11' of histone H3 (H3S10ph), and is required for chromosome segregation when cells enter into mitosis. In resting B- and T-lymphocytes, phosphorylation by AURKB leads to enhance its activity, thereby maintaining transcription in resting lymphocytes. Regulates Hox gene expression via histone H2A deubiquitination. Prefers nucleosomal substrates. Does not deubiquitinate histone H2B. Also deubiquitinates non-histone proteins, such as ribosomal protein RPS27A: deubiquitination of monoubiquitinated RPS27A promotes maturation of the 40S ribosomal subunit. Also mediates deubiquitination of tektin proteins (TEKT1, TEKT2, TEK3, TEKT4 and TEKT5), promoting their stability. The protein is Ubiquitin carboxyl-terminal hydrolase 16 (Usp16) of Rattus norvegicus (Rat).